A 227-amino-acid polypeptide reads, in one-letter code: Urease accessory protein UreF (227 aa).

The protein belongs to the UreF family. UreD, UreF and UreG form a complex that acts as a GTP-hydrolysis-dependent molecular chaperone, activating the urease apoprotein by helping to assemble the nickel containing metallocenter of UreC. The UreE protein probably delivers the nickel.

Its subcellular location is the cytoplasm. Functionally, required for maturation of urease via the functional incorporation of the urease nickel metallocenter. This Blochmanniella floridana protein is Urease accessory protein UreF.